The primary structure comprises 123 residues: Small ribosomal subunit protein uS12c (123 aa).

The protein belongs to the universal ribosomal protein uS12 family. In terms of assembly, part of the 30S ribosomal subunit.

It is found in the plastid. Its subcellular location is the chloroplast. With S4 and S5 plays an important role in translational accuracy. Located at the interface of the 30S and 50S subunits. This chain is Small ribosomal subunit protein uS12c (rps12), found in Huperzia lucidula (Shining clubmoss).